Reading from the N-terminus, the 366-residue chain is MELSEIRAELENMASRLADFRGSLDLESKEARIAELDEQMADPEFWNDQQKAQTVINEANGLKDYVNSYKKLNESHEELQMTHDLLKEEPDTDLQLELEKELKSLTKEFNEFELQLLLSEPYDKNNAILELHPGAGGTESQDWGSMLLRMYTRWGERRGFKVETLDYLPGDEAGIKSVTLLIKGHNAYGYLKAEKGVHRLVRISPFDSSGRRHTSFVSCEVMPEFNDEIDIDIRTEDIKVDTYRASGAGGQHVNTTDSAVRITHLPTNVVVTCQTERSQIKNRERAMKMLKAKLYQRRIEEQQAELDEIRGEQKEIGWGSQIRSYVFHPYSMVKDHRTNTEMGNVQAVMDGDIDTFIDAYLRSKLS.

The residue at position 251 (glutamine 251) is an N5-methylglutamine.

The protein belongs to the prokaryotic/mitochondrial release factor family. Methylated by PrmC. Methylation increases the termination efficiency of RF2.

The protein localises to the cytoplasm. Peptide chain release factor 2 directs the termination of translation in response to the peptide chain termination codons UGA and UAA. The sequence is that of Peptide chain release factor 2 (prfB) from Bacillus subtilis (strain 168).